The chain runs to 123 residues: S-adenosylmethionine decarboxylase proenzyme 2 (123 aa).

Residue S65 is the Schiff-base intermediate with substrate; via pyruvic acid of the active site. The residue at position 65 (S65) is a Pyruvic acid (Ser); by autocatalysis. H70 serves as the catalytic Proton acceptor; for processing activity. C85 acts as the Proton donor; for catalytic activity in catalysis.

This sequence belongs to the prokaryotic AdoMetDC family. Type 1 subfamily. In terms of assembly, heterotetramer of two alpha and two beta chains arranged as a dimer of alpha/beta heterodimers. Pyruvate is required as a cofactor. Is synthesized initially as an inactive proenzyme. Formation of the active enzyme involves a self-maturation process in which the active site pyruvoyl group is generated from an internal serine residue via an autocatalytic post-translational modification. Two non-identical subunits are generated from the proenzyme in this reaction, and the pyruvate is formed at the N-terminus of the alpha chain, which is derived from the carboxyl end of the proenzyme. The post-translation cleavage follows an unusual pathway, termed non-hydrolytic serinolysis, in which the side chain hydroxyl group of the serine supplies its oxygen atom to form the C-terminus of the beta chain, while the remainder of the serine residue undergoes an oxidative deamination to produce ammonia and the pyruvoyl group blocking the N-terminus of the alpha chain.

It catalyses the reaction S-adenosyl-L-methionine + H(+) = S-adenosyl 3-(methylsulfanyl)propylamine + CO2. The protein operates within amine and polyamine biosynthesis; S-adenosylmethioninamine biosynthesis; S-adenosylmethioninamine from S-adenosyl-L-methionine: step 1/1. Functionally, catalyzes the decarboxylation of S-adenosylmethionine to S-adenosylmethioninamine (dcAdoMet), the propylamine donor required for the synthesis of the polyamines spermine and spermidine from the diamine putrescine. This Bacillus anthracis protein is S-adenosylmethionine decarboxylase proenzyme 2.